Here is a 1216-residue protein sequence, read N- to C-terminus: Protein WWC3 (1216 aa).

Positions 1–63 are disordered; that stretch reads MPWLSGGRRR…RESAELPLPA (63 aa). Over residues 21 to 51 the composition is skewed to pro residues; sequence EPPPSAQPQREPPPAPPAAVPTPPAPSAPPP. WW domains lie at 59–92 and 106–139; these read LPLP…DPRD and DELP…DPRE. 2 coiled-coil regions span residues 164–250 and 354–468; these read KEIY…TLQE and DRVR…EATR. 3 disordered regions span residues 487–508, 546–612, and 634–668; these read VSSG…SSRG, GRDA…ADSC, and DLPG…VGGT. The span at 570-598 shows a compositional bias: low complexity; the sequence is PQSLASLSSRSSLSSLSPPSSPLDTPFLP. The 126-residue stretch at 722-847 folds into the C2 domain; that stretch reads SNGDPQIHVG…SLSEMQLRWH (126 aa). Positions 885–936 form a coiled coil; sequence DAVTVLLARTTAQLQAVERELAEERAKLEYTEEEVLEMERKEEQAEAISERS. Positions 1060-1079 are interaction with PRKCZ; the sequence is SPFVRNTLERRTLRYKQSCR. A coiled-coil region spans residues 1091–1160; the sequence is LDLELDLQAS…RQTRQTKLDY (70 aa).

Belongs to the WWC family. In terms of assembly, forms homodimers and heterodimers with WWC1 and WWC2. Interacts with DLC1 and PRKCZ. Interacts (via WW domains) with LATS1 and LATS2.

Its subcellular location is the cytoplasm. The protein resides in the cytosol. In terms of biological role, regulator of the Hippo signaling pathway, also known as the Salvador-Warts-Hippo (SWH) pathway. Enhances phosphorylation of LATS1 and YAP1 and negatively regulates cell proliferation and organ growth due to a suppression of the transcriptional activity of YAP1, the major effector of the Hippo pathway. The chain is Protein WWC3 from Homo sapiens (Human).